The chain runs to 321 residues: MTRKKVKLAYISNDSSRKATFKKRKKGLMKKVHELSTLCGITACAIIYSPYDTNPEVWPSNSGVQRVVSEFRTLPEMDQHKKMVDQEGFLKQRIAKATETLRRQRKDSRELEMTEVMFQCLIGNMEMFHLNIVDLNDLGYMIEQYLKDVNRRIEILRNSGTEIGESSSVAVAASEGNIPMPNLVATTAPTTTIYEVGSSSSFAAVANFVNPIDLQQFRHPAAQHVGLNEQPQNLNLNLNQNYNQNQEWFMEMMNHPEQMRYQTEQMGYQFMDDNHHNHIHHQPQEHQHQIHDESSNALDAANSSSIIPVTSSSITNKTWFH.

One can recognise an MADS-box domain in the interval 1 to 61 (MTRKKVKLAY…DTNPEVWPSN (61 aa)). The stretch at 89-114 (FLKQRIAKATETLRRQRKDSRELEMT) forms a coiled coil.

In terms of assembly, interacts with AGL61 and AGL62. Forms a heterodimer with AGL61. Interacts with MEE14/CBP1. Expressed in the central cell of the female gametophyte and in early endosperm. Also detected in ovaries, young siliques, roots, leaves, stems, young flowers and anthers.

The protein resides in the nucleus. Functionally, probable transcription factor. Controls central cell differentiation during female gametophyte development. Required for the expression of DEMETER and DD46, but not for the expression of FIS2. Probable transcription factor that may function in the maintenance of the proper function of the central cell in pollen tube attraction. This chain is Agamous-like MADS-box protein AGL80 (AGL80), found in Arabidopsis thaliana (Mouse-ear cress).